The following is a 1057-amino-acid chain: Nuclear RNAi defective-3 protein (1057 aa).

Disordered stretches follow at residues 1-89 (MDLL…GLSV) and 344-388 (LTNS…ERTV). Residues 17–30 (STAKKPATSASSTP) show a composition bias toward low complexity. 2 stretches are compositionally biased toward basic and acidic residues: residues 67–81 (PKREHTDRTGPDPKR) and 356–388 (GGRERRDGGGNSRKYDDRRSPRDGEIDYDERTV). Residues 387–500 (TVSHYQRQFQ…YPMELMSILP (114 aa)) enclose the PAZ domain. A Piwi domain is found at 677–1001 (GIIAEKRPDM…LAKRGHNNYK (325 aa)).

The protein localises to the cytoplasm. It is found in the nucleus. Transports small interfering RNAs (siRNAs) from the cytoplasm to the nucleus. Required for RNA interference (RNAi) in nuclei. Required for exogenous RNAi-induced H3K27 methylation. In Caenorhabditis elegans, this protein is Nuclear RNAi defective-3 protein (nrde-3).